The chain runs to 625 residues: tRNA uridine 5-carboxymethylaminomethyl modification enzyme MnmG (625 aa).

FAD is bound by residues 13–18 (GGGHAG), Val125, and Ser182. 276–290 (GPRYCPSIEDKITRF) contacts NAD(+). Gln373 is a binding site for FAD.

The protein belongs to the MnmG family. As to quaternary structure, homodimer. Heterotetramer of two MnmE and two MnmG subunits. Requires FAD as cofactor.

It is found in the cytoplasm. Its function is as follows. NAD-binding protein involved in the addition of a carboxymethylaminomethyl (cmnm) group at the wobble position (U34) of certain tRNAs, forming tRNA-cmnm(5)s(2)U34. The chain is tRNA uridine 5-carboxymethylaminomethyl modification enzyme MnmG from Lactococcus lactis subsp. lactis (strain IL1403) (Streptococcus lactis).